The primary structure comprises 172 residues: Shikimate kinase (172 aa).

14 to 19 provides a ligand contact to ATP; that stretch reads GAGKTT. Thr-18 contributes to the Mg(2+) binding site. Substrate contacts are provided by Asp-36, Arg-60, and Gly-82. Arg-119 contacts ATP. Position 137 (Arg-137) interacts with substrate.

It belongs to the shikimate kinase family. As to quaternary structure, monomer. It depends on Mg(2+) as a cofactor.

The protein localises to the cytoplasm. It catalyses the reaction shikimate + ATP = 3-phosphoshikimate + ADP + H(+). Its pathway is metabolic intermediate biosynthesis; chorismate biosynthesis; chorismate from D-erythrose 4-phosphate and phosphoenolpyruvate: step 5/7. Functionally, catalyzes the specific phosphorylation of the 3-hydroxyl group of shikimic acid using ATP as a cosubstrate. The sequence is that of Shikimate kinase from Thermobifida fusca (strain YX).